The primary structure comprises 508 residues: Probable monogalactosyldiacylglycerol synthase 3, chloroplastic (508 aa).

Residues 1–60 (MAASSSSSSSMASPRGRSIRETVLETVAAYHQQQRMRRKFRKSLSYAGELSSAGRARGEG) constitute a chloroplast transit peptide. The interval 51–79 (SSAGRARGEGGASSSASTTSLCGPDEDDE) is disordered.

Belongs to the glycosyltransferase 28 family.

The protein resides in the plastid. Its subcellular location is the chloroplast membrane. It catalyses the reaction a 1,2-diacyl-sn-glycerol + UDP-alpha-D-galactose = a 1,2-diacyl-3-O-(beta-D-galactosyl)-sn-glycerol + UDP + H(+). Functionally, involved in the synthesis of the major structural component of photosynthetic membranes. This Oryza sativa subsp. japonica (Rice) protein is Probable monogalactosyldiacylglycerol synthase 3, chloroplastic (MGD3).